Reading from the N-terminus, the 187-residue chain is Protein McbG (187 aa).

It belongs to the pentapeptide repeat protein family.

Together with proteins McbE and McbF this protein causes immunity to the peptide antibiotic microcin B17 (MccB17), which inhibits DNA replication in Enterobacteriaceae by induction of the SOS repair system. McbG alone can provide some protection. This chain is Protein McbG (mcbG), found in Escherichia coli.